A 238-amino-acid chain; its full sequence is CD63 antigen (238 aa).

Over 2 to 11 the chain is Cytoplasmic; that stretch reads AVEGGMKCVK. A helical membrane pass occupies residues 12 to 32; the sequence is FLLYVLLLAFCACAVGLIAVG. The Extracellular segment spans residues 33–51; the sequence is VGAQLVLSQTIIQGATPGS. A helical membrane pass occupies residues 52–72; it reads LLPVVIIAVGVFLFLVAFVGC. Over 73-81 the chain is Cytoplasmic; that stretch reads CGACKENYC. The chain crosses the membrane as a helical span at residues 82–102; it reads LMITFAIFLSLIMLVEVAAAI. Topologically, residues 103–203 are extracellular; that stretch reads AGYVFRDKVM…KIGGWLRKNV (101 aa). 3 N-linked (GlcNAc...) asparagine glycosylation sites follow: Asn-130, Asn-150, and Asn-172. The chain crosses the membrane as a helical span at residues 204-224; it reads LVVAAAALGIAFVEVLGIVFA. The Cytoplasmic portion of the chain corresponds to 225–238; that stretch reads CCLVKSIRSGYEVM. The short motif at 234 to 238 is the Lysosomal targeting motif element; sequence GYEVM.

It belongs to the tetraspanin (TM4SF) family. As to quaternary structure, interacts with TIMP1 and ITGB1 and recruits TIMP1 to ITGB1. Interacts with CD9. Identified in a complex with CD9 and ITGB3. Interacts with PMEL. Interacts with KDR/VEGFR2; identified in a complex with ITGB1 and KDR/VEGFR2 and is required to recruit KDR to ITGB1 complexes. Interacts with SYT7. Palmitoylated at a low, basal level in unstimulated platelets. The level of palmitoylation increases when platelets are activated by thrombin (in vitro). As to expression, detected in platelets (at protein level). Dysplastic nevi, radial growth phase primary melanomas, hematopoietic cells, tissue macrophages.

It localises to the cell membrane. Its subcellular location is the lysosome membrane. The protein resides in the late endosome membrane. The protein localises to the endosome. It is found in the multivesicular body. It localises to the melanosome. Its subcellular location is the secreted. The protein resides in the extracellular exosome. The protein localises to the cell surface. Functions as a cell surface receptor for TIMP1 and plays a role in the activation of cellular signaling cascades. Plays a role in the activation of ITGB1 and integrin signaling, leading to the activation of AKT, FAK/PTK2 and MAP kinases. Promotes cell survival, reorganization of the actin cytoskeleton, cell adhesion, spreading and migration, via its role in the activation of AKT and FAK/PTK2. Plays a role in VEGFA signaling via its role in regulating the internalization of KDR/VEGFR2. Plays a role in intracellular vesicular transport processes, and is required for normal trafficking of the PMEL luminal domain that is essential for the development and maturation of melanocytes. Plays a role in the adhesion of leukocytes onto endothelial cells via its role in the regulation of SELP trafficking. May play a role in mast cell degranulation in response to Ms4a2/FceRI stimulation, but not in mast cell degranulation in response to other stimuli. The polypeptide is CD63 antigen (CD63) (Homo sapiens (Human)).